The following is a 258-amino-acid chain: Type III pantothenate kinase (258 aa).

6–13 (DVGNTNTV) lines the ATP pocket. Residues tyrosine 100 and 107 to 110 (GADR) each bind substrate. Aspartate 109 (proton acceptor) is an active-site residue. Aspartate 129 provides a ligand contact to K(+). Threonine 132 contributes to the ATP binding site. Residue threonine 184 coordinates substrate.

It belongs to the type III pantothenate kinase family. As to quaternary structure, homodimer. NH4(+) serves as cofactor. It depends on K(+) as a cofactor.

It is found in the cytoplasm. The enzyme catalyses (R)-pantothenate + ATP = (R)-4'-phosphopantothenate + ADP + H(+). It participates in cofactor biosynthesis; coenzyme A biosynthesis; CoA from (R)-pantothenate: step 1/5. Catalyzes the phosphorylation of pantothenate (Pan), the first step in CoA biosynthesis. This Geobacillus thermodenitrificans (strain NG80-2) protein is Type III pantothenate kinase.